The primary structure comprises 207 residues: Outer-membrane lipoprotein LolB (207 aa).

Positions 1–21 (MPLPDFRLIRLLPLAALVLTA) are cleaved as a signal peptide. A lipid anchor (N-palmitoyl cysteine) is attached at C22. The S-diacylglycerol cysteine moiety is linked to residue C22.

It belongs to the LolB family. Monomer.

The protein localises to the cell outer membrane. Plays a critical role in the incorporation of lipoproteins in the outer membrane after they are released by the LolA protein. The protein is Outer-membrane lipoprotein LolB of Shigella boydii serotype 18 (strain CDC 3083-94 / BS512).